A 120-amino-acid polypeptide reads, in one-letter code: Immunoglobulin kappa variable 2-112 (120 aa).

An N-terminal signal peptide occupies residues 1 to 20 (MRCSLQFLGVLMFWISGVSG). A framework-1 region spans residues 21–43 (DIVITQDELSNPVTSGESVSISC). Residues C43 and C113 are joined by a disulfide bond. The interval 44-59 (RSSKSLLYKDGKTYLN) is complementarity-determining-1. Residues 60–74 (WFLQRPGQSPQLLIY) are framework-2. The complementarity-determining-2 stretch occupies residues 75–81 (LMSTRAS). The segment at 82–113 (GVSDRFSGSGSGTDFTLEISRVKAEDVGVYYC) is framework-3. The tract at residues 114–120 (QQLVEYP) is complementarity-determining-3.

The chain is Immunoglobulin kappa variable 2-112 from Mus musculus (Mouse).